A 536-amino-acid polypeptide reads, in one-letter code: Major facilitator superfamily domain-containing protein 4B (536 aa).

12 consecutive transmembrane segments (helical) span residues 19 to 39 (LTYW…GPTI), 53 to 73 (ITWV…SGGA), 81 to 101 (ALLA…IIPL), 105 to 125 (VLLL…IDTI), 140 to 160 (IFLQ…PLIA), 211 to 231 (YAFW…FVLM), 297 to 317 (FFLI…IMGV), 341 to 361 (LNCI…PLSY), 366 to 386 (VHLL…LMIL), 391 to 411 (VFLF…FPCL), 428 to 448 (VLVT…GTLI), and 456 to 476 (FLVC…SVIL).

This sequence belongs to the major facilitator superfamily.

Its subcellular location is the membrane. In Danio rerio (Zebrafish), this protein is Major facilitator superfamily domain-containing protein 4B.